Reading from the N-terminus, the 143-residue chain is Endoribonuclease YbeY (143 aa).

Zn(2+) is bound by residues H113, H117, and D123.

The protein belongs to the endoribonuclease YbeY family. Requires Zn(2+) as cofactor.

The protein localises to the cytoplasm. Single strand-specific metallo-endoribonuclease involved in late-stage 70S ribosome quality control and in maturation of the 3' terminus of the 16S rRNA. This Elusimicrobium minutum (strain Pei191) protein is Endoribonuclease YbeY.